The following is a 369-amino-acid chain: Glutamate 5-kinase (369 aa).

ATP is bound at residue K7. 3 residues coordinate substrate: S48, D135, and N147. Residues 167–168 (TD) and 208–214 (SGGMASK) contribute to the ATP site. The region spanning 275 to 353 (AGALHLDEGA…HEIAALLGIE (79 aa)) is the PUA domain.

The protein belongs to the glutamate 5-kinase family.

The protein resides in the cytoplasm. It catalyses the reaction L-glutamate + ATP = L-glutamyl 5-phosphate + ADP. The protein operates within amino-acid biosynthesis; L-proline biosynthesis; L-glutamate 5-semialdehyde from L-glutamate: step 1/2. Catalyzes the transfer of a phosphate group to glutamate to form L-glutamate 5-phosphate. This chain is Glutamate 5-kinase, found in Gloeobacter violaceus (strain ATCC 29082 / PCC 7421).